The primary structure comprises 265 residues: Type III pantothenate kinase (265 aa).

Residue 6–13 participates in ATP binding; the sequence is DVGNTNIV. Substrate is bound by residues Tyr100 and 107–110; that span reads GADR. The active-site Proton acceptor is the Asp109. A K(+)-binding site is contributed by Asp129. Thr132 lines the ATP pocket. Thr184 contributes to the substrate binding site.

It belongs to the type III pantothenate kinase family. In terms of assembly, homodimer. Requires NH4(+) as cofactor. The cofactor is K(+).

The protein resides in the cytoplasm. It catalyses the reaction (R)-pantothenate + ATP = (R)-4'-phosphopantothenate + ADP + H(+). It participates in cofactor biosynthesis; coenzyme A biosynthesis; CoA from (R)-pantothenate: step 1/5. Functionally, catalyzes the phosphorylation of pantothenate (Pan), the first step in CoA biosynthesis. In Alkaliphilus oremlandii (strain OhILAs) (Clostridium oremlandii (strain OhILAs)), this protein is Type III pantothenate kinase.